Consider the following 245-residue polypeptide: Probable transcriptional regulatory protein NSE_0641 (245 aa).

The tract at residues 1–22 is disordered; that stretch reads MAGHSQYANIKHRKNAQDAKRA.

This sequence belongs to the TACO1 family.

The protein localises to the cytoplasm. This is Probable transcriptional regulatory protein NSE_0641 from Neorickettsia sennetsu (strain ATCC VR-367 / Miyayama) (Ehrlichia sennetsu).